Here is a 406-residue protein sequence, read N- to C-terminus: Tyrosine--tRNA ligase (406 aa).

Tyr35 contacts L-tyrosine. The 'HIGH' region signature appears at 40–49 (PTADSLHVGH). L-tyrosine is bound by residues Tyr168 and Gln172. The short motif at 228–232 (KMGKT) is the 'KMSKS' region element. ATP is bound at residue Lys231. The 65-residue stretch at 340 to 404 (SELLDILVEA…RGKKNYNKIV (65 aa)) folds into the S4 RNA-binding domain.

It belongs to the class-I aminoacyl-tRNA synthetase family. TyrS type 1 subfamily. As to quaternary structure, homodimer.

It localises to the cytoplasm. The catalysed reaction is tRNA(Tyr) + L-tyrosine + ATP = L-tyrosyl-tRNA(Tyr) + AMP + diphosphate + H(+). Its function is as follows. Catalyzes the attachment of tyrosine to tRNA(Tyr) in a two-step reaction: tyrosine is first activated by ATP to form Tyr-AMP and then transferred to the acceptor end of tRNA(Tyr). The chain is Tyrosine--tRNA ligase from Clostridium perfringens (strain SM101 / Type A).